The following is a 1187-amino-acid chain: Tyrosine-protein phosphatase non-receptor type 14 (1187 aa).

An FERM domain is found at Phe21–Lys306. 3 positions are modified to phosphoserine: Ser314, Ser461, and Ser486. Over residues Leu510–Val524 the composition is skewed to polar residues. The interval Leu510–Ser531 is disordered. Phosphoserine is present on residues Ser591, Ser593, Ser594, and Ser642. Disordered regions lie at residues Leu671 to Pro690 and Lys787 to Pro824. A compositionally biased stretch (basic and acidic residues) spans Ser815–Pro824. A Phosphoserine modification is found at Ser831. The region spanning Val909–Phe1180 is the Tyrosine-protein phosphatase domain. Substrate-binding positions include Asp1079, Cys1121 to Arg1127, and Gln1165. Residue Cys1121 is the Phosphocysteine intermediate of the active site.

It belongs to the protein-tyrosine phosphatase family. Non-receptor class subfamily. Interacts with FLT4; the interaction is enhanced by stimulation with VEGFC. Interacts (via PPxY motifs) with YAP1 (via WW domains); this interaction leads to the cytoplasmic sequestration of YAP1 and inhibits its transcriptional co-activator activity. In terms of processing, ubiquitinated by the ECS (Elongin BC-CUL2/5-SOCS-box protein)/LRR1 E3 ligase complex and subsequently targeted to proteasomal degradation. In terms of tissue distribution, ubiquitous.

The protein localises to the cytoplasm. Its subcellular location is the cytoskeleton. It localises to the nucleus. The enzyme catalyses O-phospho-L-tyrosyl-[protein] + H2O = L-tyrosyl-[protein] + phosphate. Protein tyrosine phosphatase which may play a role in the regulation of lymphangiogenesis, cell-cell adhesion, cell-matrix adhesion, cell migration, cell growth and also regulates TGF-beta gene expression, thereby modulating epithelial-mesenchymal transition. Mediates beta-catenin dephosphorylation at adhesion junctions. Acts as a negative regulator of the oncogenic property of YAP, a downstream target of the hippo pathway, in a cell density-dependent manner. May function as a tumor suppressor. The polypeptide is Tyrosine-protein phosphatase non-receptor type 14 (PTPN14) (Homo sapiens (Human)).